Consider the following 135-residue polypeptide: Congerin-1 (135 aa).

N-acetylserine is present on Ser1. Residues 3-135 form the Galectin domain; that stretch reads GLQVKNFDFT…GDARLTLVKE (133 aa). Residue 70 to 76 participates in a beta-D-galactoside binding; sequence WETEQRS.

Homodimer.

Its function is as follows. This protein binds beta-galactoside. Its physiological function is not yet known. In Conger myriaster (Conger eel), this protein is Congerin-1.